We begin with the raw amino-acid sequence, 508 residues long: Galactose-1-phosphate uridylyltransferase (508 aa).

Belongs to the galactose-1-phosphate uridylyltransferase type 2 family.

The protein resides in the cytoplasm. It catalyses the reaction alpha-D-galactose 1-phosphate + UDP-alpha-D-glucose = alpha-D-glucose 1-phosphate + UDP-alpha-D-galactose. The protein operates within carbohydrate metabolism; galactose metabolism. This chain is Galactose-1-phosphate uridylyltransferase (galT), found in Halalkalibacterium halodurans (strain ATCC BAA-125 / DSM 18197 / FERM 7344 / JCM 9153 / C-125) (Bacillus halodurans).